A 606-amino-acid chain; its full sequence is DNA ligase (606 aa).

E263 contributes to the ATP binding site. Catalysis depends on K265, which acts as the N6-AMP-lysine intermediate. ATP is bound by residues R270, R285, E315, F355, R432, and K438.

Belongs to the ATP-dependent DNA ligase family. Mg(2+) serves as cofactor. Mn(2+) is required as a cofactor.

It catalyses the reaction ATP + (deoxyribonucleotide)n-3'-hydroxyl + 5'-phospho-(deoxyribonucleotide)m = (deoxyribonucleotide)n+m + AMP + diphosphate.. The enzyme catalyses ADP + (deoxyribonucleotide)n-3'-hydroxyl + 5'-phospho-(deoxyribonucleotide)m = (deoxyribonucleotide)n+m + AMP + phosphate.. The catalysed reaction is GTP + (deoxyribonucleotide)n-3'-hydroxyl + 5'-phospho-(deoxyribonucleotide)m = (deoxyribonucleotide)n+m + GMP + diphosphate.. DNA ligase that seals nicks in double-stranded DNA during DNA replication, DNA recombination and DNA repair. Can use ATP, ADP and GTP, but not CTP, TTP or NAD(+). This chain is DNA ligase, found in Sulfophobococcus zilligii.